Reading from the N-terminus, the 373-residue chain is MEKEDAGAVQCGTGEGEAVVLNERSEQCSAFASIAGCDEAVAQCFLAENDWDMERAINSFFEPGVESALQNKAAADIADPLKQETMSGTASDSCIDLTGDDLVVTKSEATTSNSSTVKQEDESHFSFLTWNIDGLDESNVAERARGVCSYLALYSPDVVFLQEVIPPYYEYLKKRAVSYTIITGNEDEYFTAMMLKKSRVKLISQEIVPYPSTVMMRNLLVANVNISGNSICLMTSHLESTKDHSKERLKQLDIVLKKMMDAPPLATVIFGGDTNLRDQEVAKIGGMPNNILDVWDFLGKPEHCRYTWDTKVNKNLRAPYICRLRFDRIFFRASQEGSQVIPQSLYLAGTEKLDCGRFPSDHWGLLCDFAIIL.

The segment at 131-135 (NIDGL) is interaction with 5' end of substrate DNA. Residues aspartate 133 and glutamate 163 each contribute to the Mg(2+) site. The interaction with 5' end of substrate DNA stretch occupies residues 237 to 242 (HLESTK). Aspartate 273 serves as the catalytic Proton donor/acceptor. The interval 275–277 (NLR) is interaction with 5' end of substrate DNA.

Belongs to the CCR4/nocturin family. TTRAP/TDP2 subfamily. Mg(2+) serves as cofactor. It depends on Mn(2+) as a cofactor.

It localises to the nucleus. The protein resides in the PML body. In terms of biological role, DNA repair enzyme that can remove a variety of covalent adducts from DNA through hydrolysis of a 5'-phosphodiester bond, giving rise to DNA with a free 5' phosphate. Catalyzes the hydrolysis of dead-end complexes between DNA and the topoisomerase 2 (top2) active site tyrosine residue. Hydrolyzes 5'-phosphoglycolates on protruding 5' ends on DNA double-strand breaks (DSBs) due to DNA damage by radiation and free radicals. The chain is Tyrosyl-DNA phosphodiesterase 2 (tdp2) from Xenopus tropicalis (Western clawed frog).